The sequence spans 416 residues: S-adenosylmethionine synthase (416 aa).

H14 is an ATP binding site. Mg(2+) is bound at residue D16. E42 lines the K(+) pocket. The L-methionine site is built by E55 and Q98. Positions 98-108 (QSPDIARGVDT) are flexible loop. Residues 173–175 (DGK), 249–250 (KF), D258, 264–265 (RK), A281, and K285 contribute to the ATP site. D258 contacts L-methionine. K289 serves as a coordination point for L-methionine.

It belongs to the AdoMet synthase family. In terms of assembly, homotetramer; dimer of dimers. Requires Mg(2+) as cofactor. It depends on K(+) as a cofactor.

It is found in the cytoplasm. The enzyme catalyses L-methionine + ATP + H2O = S-adenosyl-L-methionine + phosphate + diphosphate. Its pathway is amino-acid biosynthesis; S-adenosyl-L-methionine biosynthesis; S-adenosyl-L-methionine from L-methionine: step 1/1. Functionally, catalyzes the formation of S-adenosylmethionine (AdoMet) from methionine and ATP. The overall synthetic reaction is composed of two sequential steps, AdoMet formation and the subsequent tripolyphosphate hydrolysis which occurs prior to release of AdoMet from the enzyme. The polypeptide is S-adenosylmethionine synthase (Thermosynechococcus vestitus (strain NIES-2133 / IAM M-273 / BP-1)).